A 396-amino-acid polypeptide reads, in one-letter code: G-protein coupled receptor 84 (396 aa).

The Extracellular segment spans residues 1–26 (MWNASDVNFSCYHESVLGYRYVAVSW). Residues Asn-3 and Asn-8 are each glycosylated (N-linked (GlcNAc...) asparagine). A helical membrane pass occupies residues 27–47 (GIVVAVTGTVGNVLTLLALAI). Over 48–57 (QPKLRTRFNL) the chain is Cytoplasmic. A helical membrane pass occupies residues 58–78 (LIANLTVADLLYCTLLQPFSV). The Extracellular segment spans residues 79–94 (DTYLHLHWRTGATFCQ). The helical transmembrane segment at 95-115 (IFGFLLFVSNSVSILTLCLIA) threads the bilayer. The Cytoplasmic segment spans residues 116–144 (LGRYLLIAHPKLFPQVFSAKGIVLALVST). The helical transmembrane segment at 145-165 (WVVAVASFAPLWPIYILVPVV) threads the bilayer. Topologically, residues 166 to 180 (CTCSFDRIRGQPYTT) are extracellular. A helical membrane pass occupies residues 181–201 (ILMGIYFVVGLSSVGVFYCLI). The Cytoplasmic portion of the chain corresponds to 202–320 (HQQVKRAAQA…PSEFGKVTRM (119 aa)). Ser-221 and Ser-224 each carry phosphoserine. Residues 243–310 (SGLASGGPSE…TKGAQRAQDS (68 aa)) are disordered. Phosphothreonine occurs at positions 263 and 264. The helical transmembrane segment at 321–341 (CFAVFLCFTLSYIPFLLLNIL) threads the bilayer. The Extracellular portion of the chain corresponds to 342–352 (DAKVQAPRVVH). A helical membrane pass occupies residues 353-373 (MLAANLTWLNGCINPVLYAAM). Residues 374–396 (NRQFRQAYGSLLRRGPQSFHRFH) are Cytoplasmic-facing.

Belongs to the G-protein coupled receptor 1 family. In terms of assembly, interacts with ARRB2 and ARR3. In terms of processing, phosphorylated by a subset of GPR84-activating ligands. Constitutively phosphorylated at Ser-221 and Ser-224 in the absence of 2-HTP. By contrast, Thr-263 and Thr-264 are phosphorylated only following prior cell treatment with 2-HTP.

The protein localises to the cell membrane. Functionally, g protein-coupled receptor that responds endogenously to dietary fatty acids or nutrient, specifically medium-chain free fatty acid (FFA) with carbon chain lengths of C9 to C14. Capric acid (C10:0), undecanoic acid (C11:0) and lauric acid (C12:0) are the most potent agonists. In immune cells, functions as a pro-inflammatory receptor via 6-OAU and promotes the expression of pro-inflammatory mediators such as TNFalpha, IL-6 and IL-12B as well as stimulating chemotactic responses through activation of signaling mediators AKT, ERK and NF-kappa-B. In addition, triggers increased bacterial adhesion and phagocytosis in macrophages and regulates pro-inflammatory function via enhancing NLRP3 inflammasome activation. Also plays an important role in inflammation by modulating neutrophil functions. Mechanistically, promotes neutrophil chemotaxis, reactive oxygen species (ROS) production and degranulation via LYN-AKT/ERK pathway. To regulate ROS, communicates with the two formyl peptide receptors FPR2 and FPR1 to control the NADPH oxidase activity in neutrophils. The polypeptide is G-protein coupled receptor 84 (GPR84) (Bos taurus (Bovine)).